The following is a 252-amino-acid chain: Receptor expression-enhancing protein 2 (252 aa).

A run of 2 helical transmembrane segments spans residues 1-21 and 35-55; these read MVSW…YPAY and YVKW…ETLT. Ser-150 carries the phosphoserine modification. Residues 165–252 form a disordered region; it reads LQRPDGRLRP…KKTSGGGDSA (88 aa). Positions 203–217 are enriched in basic and acidic residues; that stretch reads SRTEASEDDMGDKAP.

This sequence belongs to the DP1 family. In terms of assembly, interacts with odorant receptor proteins. Detected in brain, heart and skeletal muscle, and at low levels in placenta, kidney and pancreas. Expressed in circumvallate papillae.

The protein resides in the membrane. Required for endoplasmic reticulum (ER) network formation, shaping and remodeling. May enhance the cell surface expression of odorant receptors. This is Receptor expression-enhancing protein 2 (REEP2) from Homo sapiens (Human).